The following is a 421-amino-acid chain: MSKTHLTEQKFSDFALHPQVVEALEKKGFYNCTPIQALALPLTLAGRDVAGQAQTGTGKTMAFLTSTFHYLLSHPAIDDRKVNQPRALIMAPTRELAVQIHADAEPLAQATGLKLGLAYGGDGYDKQLKVLESGVDILIGTTGRLIDYAKQNHINLGAIQVVVLDEADRMYDLGFIKDIRWLFRRVPPAAQRLNMLFSATLSYRVRELAFEQMNNAEYVEVEPEQKTGHRIKEELFYPSNEEKMRLLQTLIEEEWPDRAIIFANTKHRCEDIWGHLAADGHRVGLLTGDVAQKKRLRILDEFTRGDLDILVATDVAARGLHIPAVTHVFNYDLPDDCEDYVHRIGRTGRAGASGHSISLACEEYALNLPAIESYIGHSIPVSKYNPEALMNDLPKPLRLTRSRPGNGPRRAGAPRNRRRSG.

Residues 9-37 (QKFSDFALHPQVVEALEKKGFYNCTPIQA) carry the Q motif motif. The 180-residue stretch at 40-219 (LPLTLAGRDV…FEQMNNAEYV (180 aa)) folds into the Helicase ATP-binding domain. 53 to 60 (AQTGTGKT) lines the ATP pocket. The DEAD box signature appears at 165–168 (DEAD). In terms of domain architecture, Helicase C-terminal spans 245-390 (RLLQTLIEEE…VSKYNPEALM (146 aa)). Positions 396–421 (PLRLTRSRPGNGPRRAGAPRNRRRSG) are disordered. The segment covering 402–414 (SRPGNGPRRAGAP) has biased composition (low complexity).

The protein belongs to the DEAD box helicase family. RhlB subfamily. As to quaternary structure, component of the RNA degradosome, which is a multiprotein complex involved in RNA processing and mRNA degradation.

The protein localises to the cytoplasm. It catalyses the reaction ATP + H2O = ADP + phosphate + H(+). DEAD-box RNA helicase involved in RNA degradation. Has RNA-dependent ATPase activity and unwinds double-stranded RNA. The chain is ATP-dependent RNA helicase RhlB from Salmonella paratyphi A (strain AKU_12601).